The following is a 131-amino-acid chain: Profilin-9 (131 aa).

A disulfide bond links Cys13 and Cys115. The Involved in PIP2 interaction motif lies at 81-97 (AVIRGKKGSGGITVKKT). Residue Thr111 is modified to Phosphothreonine.

It belongs to the profilin family. Occurs in many kinds of cells as a complex with monomeric actin in a 1:1 ratio. Post-translationally, phosphorylated by MAP kinases.

The protein resides in the cytoplasm. It is found in the cytoskeleton. In terms of biological role, binds to actin and affects the structure of the cytoskeleton. At high concentrations, profilin prevents the polymerization of actin, whereas it enhances it at low concentrations. This is Profilin-9 from Zea mays (Maize).